Consider the following 808-residue polypeptide: Homeobox-leucine zipper protein HDG1 (808 aa).

Residues 57 to 121 form a disordered region; that stretch reads LQTNGEMSRN…KRYHRHTPKQ (65 aa). Over residues 79–90 the composition is skewed to basic and acidic residues; it reads SRGEDVESRSES. Positions 108 to 119 are enriched in basic residues; it reads LKKKKRYHRHTP. Residues 110 to 169 constitute a DNA-binding region (homeobox); that stretch reads KKKRYHRHTPKQIQDLESVFKECAHPDEKQRLDLSRRLNLDPRQVKFWFQNRRTQMKTQI. Positions 158 to 233 form a coiled coil; the sequence is FQNRRTQMKT…SRLKDELDRV (76 aa). The 232-residue stretch at 310 to 541 folds into the START domain; the sequence is DFDQRSRYLD…LQRQCECLTI (232 aa).

It belongs to the HD-ZIP homeobox family. Class IV subfamily. Interacts with CFL1. Binds with BBM. In terms of tissue distribution, expressed in trichomes forming at the base of young leaves, in endodermal cell lines around emergent lateral roots and in the epidermal layer of the stamen filament.

The protein localises to the nucleus. In terms of biological role, probable transcription factor. Promotes cuticle development probably by modulating the expression of the downstream genes BDG and FDH, possibly repressed in a CFL1-dependent manner. Involved, together with PDF2, in the regulation of flower organs development by promoting the expression of APETALA 3 (AP3) in the epidermis and internal cell layers of developing flowers. In opposition to BBM, seems to promote cell differentiation and giant cell identity via transcriptional repression of meristem and cell proliferation genes. The chain is Homeobox-leucine zipper protein HDG1 from Arabidopsis thaliana (Mouse-ear cress).